Consider the following 20-residue polypeptide: Endo-1,6-beta-glucanase (20 aa).

Belongs to the glycosyl hydrolase 5 (cellulase A) family.

The protein localises to the secreted. It is found in the extracellular space. The enzyme catalyses Random hydrolysis of (1-&gt;6)-linkages in (1-&gt;6)-beta-D-glucans.. In terms of biological role, endo-1,6-beta-glucanase that has highest activity against the beta-1,6-glucan pustulan. Also active against the beta-1,6-glucan lutean. Lower activity against laminarin (beta-1,3-glucan with beta-1,6-branches). Little or no activity against gentiobiose, yeast glucan, lichenin, scleroglucan, curdlan, barley glucan, CM cellulose, HE cellulose, pachyman and pullulan. This Acremonium sp protein is Endo-1,6-beta-glucanase.